Here is a 442-residue protein sequence, read N- to C-terminus: Probable D-serine dehydratase (442 aa).

Lysine 115 is modified (N6-(pyridoxal phosphate)lysine).

It belongs to the serine/threonine dehydratase family. DsdA subfamily. Requires pyridoxal 5'-phosphate as cofactor.

The catalysed reaction is D-serine = pyruvate + NH4(+). The protein is Probable D-serine dehydratase of Halalkalibacterium halodurans (strain ATCC BAA-125 / DSM 18197 / FERM 7344 / JCM 9153 / C-125) (Bacillus halodurans).